Here is a 175-residue protein sequence, read N- to C-terminus: ATP synthase subunit b (175 aa).

The helical transmembrane segment at 22-42 threads the bilayer; it reads LNLLETNIINIAIVFGLLIFL.

Belongs to the ATPase B chain family. In terms of assembly, F-type ATPases have 2 components, F(1) - the catalytic core - and F(0) - the membrane proton channel. F(1) has five subunits: alpha(3), beta(3), gamma(1), delta(1), epsilon(1). F(0) has four main subunits: a(1), b(1), b'(1) and c(10-14). The alpha and beta chains form an alternating ring which encloses part of the gamma chain. F(1) is attached to F(0) by a central stalk formed by the gamma and epsilon chains, while a peripheral stalk is formed by the delta, b and b' chains.

It is found in the cell inner membrane. Its function is as follows. F(1)F(0) ATP synthase produces ATP from ADP in the presence of a proton or sodium gradient. F-type ATPases consist of two structural domains, F(1) containing the extramembraneous catalytic core and F(0) containing the membrane proton channel, linked together by a central stalk and a peripheral stalk. During catalysis, ATP synthesis in the catalytic domain of F(1) is coupled via a rotary mechanism of the central stalk subunits to proton translocation. Component of the F(0) channel, it forms part of the peripheral stalk, linking F(1) to F(0). The polypeptide is ATP synthase subunit b (Gloeobacter violaceus (strain ATCC 29082 / PCC 7421)).